We begin with the raw amino-acid sequence, 583 residues long: Eukaryotic translation initiation factor 3 subunit D (583 aa).

A disordered region spans residues 116 to 150; the sequence is GRAQRGAGQRGGRAGFQRVGAGRGQGDRFYDNRGG. A compositionally biased stretch (basic and acidic residues) spans 140 to 149; it reads QGDRFYDNRG. The interval 298 to 312 is RNA gate; it reads SLDLVTVNENAIDAP. A disordered region spans residues 561–583; the sequence is NTFEEDEEAAAEEEEQKAEEDEE. Acidic residues predominate over residues 563–583; the sequence is FEEDEEAAAEEEEQKAEEDEE.

Belongs to the eIF-3 subunit D family. As to quaternary structure, component of the eukaryotic translation initiation factor 3 (eIF-3) complex.

The protein localises to the cytoplasm. MRNA cap-binding component of the eukaryotic translation initiation factor 3 (eIF-3) complex, which is involved in protein synthesis of a specialized repertoire of mRNAs and, together with other initiation factors, stimulates binding of mRNA and methionyl-tRNAi to the 40S ribosome. The eIF-3 complex specifically targets and initiates translation of a subset of mRNAs involved in cell proliferation. In the eIF-3 complex, eif3d specifically recognizes and binds the 7-methylguanosine cap of a subset of mRNAs. This Aspergillus oryzae (strain ATCC 42149 / RIB 40) (Yellow koji mold) protein is Eukaryotic translation initiation factor 3 subunit D.